The sequence spans 421 residues: ATP-dependent RNA helicase RhlB (421 aa).

The short motif at 9–37 is the Q motif element; the sequence is QKFSDFALHPKVVEALEKKGFHNCTPIQA. A Helicase ATP-binding domain is found at 40–219; the sequence is LPLTLAGRDV…FEQMNNAEYI (180 aa). Position 53-60 (53-60) interacts with ATP; sequence AQTGTGKT. Residues 165-168 carry the DEAD box motif; it reads DEAD. Residues 245–390 form the Helicase C-terminal domain; that stretch reads RLLQTLIEEE…VSKYNPDALM (146 aa). The disordered stretch occupies residues 392 to 421; it reads DLPKPLRLTRPRTGNGPRRTGAPRNRRRSG. Low complexity predominate over residues 402–414; that stretch reads PRTGNGPRRTGAP.

It belongs to the DEAD box helicase family. RhlB subfamily. In terms of assembly, component of the RNA degradosome, which is a multiprotein complex involved in RNA processing and mRNA degradation.

Its subcellular location is the cytoplasm. It carries out the reaction ATP + H2O = ADP + phosphate + H(+). DEAD-box RNA helicase involved in RNA degradation. Has RNA-dependent ATPase activity and unwinds double-stranded RNA. This Escherichia coli O157:H7 protein is ATP-dependent RNA helicase RhlB.